The following is a 393-amino-acid chain: Dual-specificity RNA methyltransferase RlmN (393 aa).

Catalysis depends on E114, which acts as the Proton acceptor. The region spanning 120–359 (EDDRATLCVS…VIVRKTRGDD (240 aa)) is the Radical SAM core domain. C127 and C364 are joined by a disulfide. The [4Fe-4S] cluster site is built by C134, C138, and C141. Residues 188–189 (GE), S220, 242–244 (SLH), and N321 contribute to the S-adenosyl-L-methionine site. C364 serves as the catalytic S-methylcysteine intermediate.

The protein belongs to the radical SAM superfamily. RlmN family. It depends on [4Fe-4S] cluster as a cofactor.

It is found in the cytoplasm. The enzyme catalyses adenosine(2503) in 23S rRNA + 2 reduced [2Fe-2S]-[ferredoxin] + 2 S-adenosyl-L-methionine = 2-methyladenosine(2503) in 23S rRNA + 5'-deoxyadenosine + L-methionine + 2 oxidized [2Fe-2S]-[ferredoxin] + S-adenosyl-L-homocysteine. It catalyses the reaction adenosine(37) in tRNA + 2 reduced [2Fe-2S]-[ferredoxin] + 2 S-adenosyl-L-methionine = 2-methyladenosine(37) in tRNA + 5'-deoxyadenosine + L-methionine + 2 oxidized [2Fe-2S]-[ferredoxin] + S-adenosyl-L-homocysteine. Functionally, specifically methylates position 2 of adenine 2503 in 23S rRNA and position 2 of adenine 37 in tRNAs. m2A2503 modification seems to play a crucial role in the proofreading step occurring at the peptidyl transferase center and thus would serve to optimize ribosomal fidelity. The polypeptide is Dual-specificity RNA methyltransferase RlmN (Actinobacillus pleuropneumoniae serotype 5b (strain L20)).